The following is a 461-amino-acid chain: Nuclear distribution protein PAC1 (461 aa).

Residues 9 to 41 enclose the LisH domain; sequence QAEELHKSIIAYLTANNLLDTANTLRAELNLNE. The stretch at 61-88 forms a coiled coil; that stretch reads TSVVRLQKKIMDLESRMSAMQAELDNAT. WD repeat units lie at residues 114 to 155, 157 to 197, 201 to 248, 251 to 290, 312 to 355, 357 to 396, 401 to 446, and 448 to 461; these read SHRD…RTIK, HTRA…KNIR, GHDH…CLRT, GHTA…PETK, QYLS…LLTL, GHDN…KCIK, AHER…IRCV, and ATGG…IFAN.

The protein belongs to the WD repeat LIS1/nudF family. Self-associates. Interacts with NDL1 and dynein.

It is found in the cytoplasm. The protein localises to the cytoskeleton. The protein resides in the spindle pole. Functionally, positively regulates the activity of the minus-end directed microtubule motor protein dynein. May enhance dynein-mediated microtubule sliding by targeting dynein to the microtubule plus end. Required for nuclear migration during vegetative growth as well as development. Required for retrograde early endosome (EE) transport from the hyphal tip. Required for localization of dynein to the mitotic spindle poles. Recruits additional proteins to the dynein complex at SPBs. The polypeptide is Nuclear distribution protein PAC1 (Arthroderma benhamiae (strain ATCC MYA-4681 / CBS 112371) (Trichophyton mentagrophytes)).